The chain runs to 65 residues: Large ribosomal subunit protein uL29 (65 aa).

The protein belongs to the universal ribosomal protein uL29 family.

This chain is Large ribosomal subunit protein uL29, found in Acidovorax ebreus (strain TPSY) (Diaphorobacter sp. (strain TPSY)).